A 353-amino-acid chain; its full sequence is Mitochondrial glutathione transporter SLC25A40 (353 aa).

Solcar repeat units lie at residues 14–132 (ITPF…LFAL), 140–224 (RSDL…GKWW), and 234–328 (PTVA…GKAF). A run of 6 helical transmembrane segments spans residues 20–40 (MMAS…LDVV), 104–124 (LWSG…IYFT), 143–163 (LAPL…ISPL), 200–221 (WGPT…YEKG), 237–257 (AITF…TLPF), and 299–319 (GLFA…AIMI).

Belongs to the mitochondrial carrier (TC 2.A.29) family.

Its subcellular location is the mitochondrion inner membrane. The catalysed reaction is glutathione(in) = glutathione(out). Probable mitochondrial transporter required for glutathione import into mitochondria. Glutathione, which plays key roles in oxidative metabolism, is produced exclusively in the cytosol and is imported in many organelles. Mitochondrial glutathione is required for the activity and stability of proteins containing iron-sulfur clusters. The chain is Mitochondrial glutathione transporter SLC25A40 from Danio rerio (Zebrafish).